A 314-amino-acid chain; its full sequence is Dihydroorotate dehydrogenase (fumarate) (314 aa).

Residues K46, 70 to 74 (NSMGL), and N130 contribute to the substrate site. A Glycyl lysine isopeptide (Lys-Gly) (interchain with G-Cter in ubiquitin) cross-link involves residue K46. 46 to 47 (KS) contacts FMN. N130 provides a ligand contact to FMN. The Nucleophile role is filled by C133. Positions 167 and 195 each coordinate FMN. 196 to 197 (NS) contributes to the substrate binding site. Residues G224, 252–253 (GG), and 274–275 (GT) each bind FMN.

It belongs to the dihydroorotate dehydrogenase family. Type 1 subfamily. As to quaternary structure, homodimer. FMN serves as cofactor.

Its subcellular location is the cytoplasm. The enzyme catalyses (S)-dihydroorotate + fumarate = orotate + succinate. It functions in the pathway pyrimidine metabolism; UMP biosynthesis via de novo pathway. Its activity is regulated as follows. The activity is independent of the presence of oxygen. Its function is as follows. Catalyzes the conversion of dihydroorotate to orotate with fumarate as the electron acceptor. Molecular oxygen can replace fumarate in vitro. Does not use oxaloacetate or NAD or NADP as electron acceptors. The chain is Dihydroorotate dehydrogenase (fumarate) (URA1) from Saccharomyces cerevisiae (strain ATCC 204508 / S288c) (Baker's yeast).